The following is a 238-amino-acid chain: MAREQLNGASYNWNAFPDRPQLAVALAGRVADRLTRAIAERGTAVLAVSGGTTPTKFFAALSAMPIAWDKVIVTLVDERFVPASSPRSNAGLVAANLLQNAAKAARFVPLYHEASGIEDAAASDDAALRSLPWPLDVVVLGMGPDGHTASFFPDADDLAELLDPASDRIILPVHAASAGEPRLTLTLARIIDAGFIALHIEGEDKRTAFDGAVAPGPRKPIRAVLDAAPRPVEVFWAP.

It belongs to the glucosamine/galactosamine-6-phosphate isomerase family. 6-phosphogluconolactonase subfamily.

The enzyme catalyses 6-phospho-D-glucono-1,5-lactone + H2O = 6-phospho-D-gluconate + H(+). The protein operates within carbohydrate degradation; pentose phosphate pathway; D-ribulose 5-phosphate from D-glucose 6-phosphate (oxidative stage): step 2/3. In terms of biological role, hydrolysis of 6-phosphogluconolactone to 6-phosphogluconate. The sequence is that of 6-phosphogluconolactonase (pgl) from Mesorhizobium japonicum (strain LMG 29417 / CECT 9101 / MAFF 303099) (Mesorhizobium loti (strain MAFF 303099)).